The primary structure comprises 66 residues: Large ribosomal subunit protein bL32 (66 aa).

Over residues 1 to 19 the composition is skewed to basic residues; it reads MAIVPKRKTSKQRKHKRNT. Residues 1–21 are disordered; sequence MAIVPKRKTSKQRKHKRNTHS.

Belongs to the bacterial ribosomal protein bL32 family.

In Mycoplasmopsis synoviae (strain 53) (Mycoplasma synoviae), this protein is Large ribosomal subunit protein bL32.